The sequence spans 681 residues: Long-chain-fatty-acid--CoA ligase heimdall (681 aa).

ATP is bound by residues 223 to 231, 414 to 419, Asp-491, Arg-506, and Lys-639; these read TSGTVGMPK and ECYGMS.

This sequence belongs to the ATP-dependent AMP-binding enzyme family. Bubblegum subfamily.

The enzyme catalyses a long-chain fatty acid + ATP + CoA = a long-chain fatty acyl-CoA + AMP + diphosphate. In terms of biological role, mediates activation of long-chain fatty acids for both synthesis of cellular lipids, and degradation via beta-oxidation. Probably by regulating lipid storage and catabolism, plays a role in neuronal function. The polypeptide is Long-chain-fatty-acid--CoA ligase heimdall (Drosophila melanogaster (Fruit fly)).